The following is a 360-amino-acid chain: Tryptophan--tRNA ligase, mitochondrial (360 aa).

The transit peptide at 1–18 directs the protein to the mitochondrion; sequence MALHSMRKARERWSFIRA. ATP-binding positions include Gln42 and 48-51; that span reads HLGN. Asp167 lines the L-tryptophan pocket. Residues 179-181, Val217, and 226-230 contribute to the ATP site; these read GED and KMSKS.

Belongs to the class-I aminoacyl-tRNA synthetase family. In terms of tissue distribution, brain.

Its subcellular location is the mitochondrion matrix. It is found in the mitochondrion. The catalysed reaction is tRNA(Trp) + L-tryptophan + ATP = L-tryptophyl-tRNA(Trp) + AMP + diphosphate + H(+). Catalyzes the attachment of tryptophan to tRNA(Trp) in a two-step reaction: tryptophan is first activated by ATP to form Trp-AMP and then transferred to the acceptor end of tRNA(Trp). This is Tryptophan--tRNA ligase, mitochondrial (WARS2) from Homo sapiens (Human).